The chain runs to 418 residues: Hydroxysqualene dehydroxylase (418 aa).

The protein belongs to the HpnE family.

The catalysed reaction is squalene + FAD + H2O + H(+) = hydroxysqualene + FADH2. The protein operates within secondary metabolite biosynthesis; hopanoid biosynthesis. In terms of biological role, involved in the biosynthesis of the hopanoid precursor squalene (SQ) from farnesyl diphosphate (FPP). Catalyzes the third (last) step, the reduction of hydroxysqualene (HSQ) to SQ. The polypeptide is Hydroxysqualene dehydroxylase (Rhodopseudomonas palustris (strain ATCC BAA-98 / CGA009)).